Here is a 251-residue protein sequence, read N- to C-terminus: Flagellar L-ring protein (251 aa).

The N-terminal stretch at 1–17 is a signal peptide; it reads MIRKLAALIVAAAALQA. The N-palmitoyl cysteine moiety is linked to residue C18. Residue C18 is the site of S-diacylglycerol cysteine attachment.

This sequence belongs to the FlgH family. As to quaternary structure, the basal body constitutes a major portion of the flagellar organelle and consists of four rings (L,P,S, and M) mounted on a central rod.

The protein localises to the cell outer membrane. It is found in the bacterial flagellum basal body. Its function is as follows. Assembles around the rod to form the L-ring and probably protects the motor/basal body from shearing forces during rotation. This Maricaulis maris (strain MCS10) (Caulobacter maris) protein is Flagellar L-ring protein.